The chain runs to 279 residues: NAD kinase (279 aa).

Catalysis depends on Asp-57, which acts as the Proton acceptor. Residues 57–58 (DG), 133–134 (NE), Arg-159, Asp-161, and 172–177 (TAYNKS) each bind NAD(+).

This sequence belongs to the NAD kinase family. It depends on a divalent metal cation as a cofactor.

It is found in the cytoplasm. It catalyses the reaction NAD(+) + ATP = ADP + NADP(+) + H(+). Involved in the regulation of the intracellular balance of NAD and NADP, and is a key enzyme in the biosynthesis of NADP. Catalyzes specifically the phosphorylation on 2'-hydroxyl of the adenosine moiety of NAD to yield NADP. This is NAD kinase from Streptococcus pyogenes serotype M12 (strain MGAS2096).